The sequence spans 194 residues: Phosphoheptose isomerase (194 aa).

The SIS domain occupies 31-186 (ICQRFQAGNK…CEQVESRLFA (156 aa)). Position 46–48 (46–48 (NGG)) interacts with substrate. Residues H55 and E59 each contribute to the Zn(2+) site. Substrate contacts are provided by residues E59, 88-89 (ND), 114-116 (STS), S119, and Q166. Q166 and H174 together coordinate Zn(2+).

This sequence belongs to the SIS family. GmhA subfamily. Zn(2+) serves as cofactor.

The protein resides in the cytoplasm. It carries out the reaction 2 D-sedoheptulose 7-phosphate = D-glycero-alpha-D-manno-heptose 7-phosphate + D-glycero-beta-D-manno-heptose 7-phosphate. The protein operates within carbohydrate biosynthesis; D-glycero-D-manno-heptose 7-phosphate biosynthesis; D-glycero-alpha-D-manno-heptose 7-phosphate and D-glycero-beta-D-manno-heptose 7-phosphate from sedoheptulose 7-phosphate: step 1/1. In terms of biological role, catalyzes the isomerization of sedoheptulose 7-phosphate in D-glycero-D-manno-heptose 7-phosphate. This is Phosphoheptose isomerase from Synechocystis sp. (strain ATCC 27184 / PCC 6803 / Kazusa).